The following is a 229-amino-acid chain: ATP synthase subunit a 3 (229 aa).

The next 6 helical transmembrane spans lie at 25–45 (ADAVSYTWLIIALLLLLSFLA), 86–106 (VATIGIFVLVSNLIGLIPGFF), 111–131 (NINTTAACAIVVFLSTHVVGI), 142–162 (FCGPILWLTPIMFFIEVIGHL), 181–201 (LVLIIFFGLAPFLVPLPMMLM), and 202–222 (GVLVSFIQAFVFMLLTMIYIQ).

This sequence belongs to the ATPase A chain family. In terms of assembly, F-type ATPases have 2 components, CF(1) - the catalytic core - and CF(0) - the membrane proton channel. CF(1) has five subunits: alpha(3), beta(3), gamma(1), delta(1), epsilon(1). CF(0) has three main subunits: a(1), b(2) and c(9-12). The alpha and beta chains form an alternating ring which encloses part of the gamma chain. CF(1) is attached to CF(0) by a central stalk formed by the gamma and epsilon chains, while a peripheral stalk is formed by the delta and b chains.

The protein localises to the cell inner membrane. Its function is as follows. Key component of the proton channel; it plays a direct role in the translocation of protons across the membrane. This chain is ATP synthase subunit a 3, found in Pelobacter propionicus (strain DSM 2379 / NBRC 103807 / OttBd1).